Reading from the N-terminus, the 259-residue chain is Imidazole glycerol phosphate synthase subunit HisF (259 aa).

Catalysis depends on residues Asp11 and Asp130.

This sequence belongs to the HisA/HisF family. As to quaternary structure, heterodimer of HisH and HisF.

The protein resides in the cytoplasm. The enzyme catalyses 5-[(5-phospho-1-deoxy-D-ribulos-1-ylimino)methylamino]-1-(5-phospho-beta-D-ribosyl)imidazole-4-carboxamide + L-glutamine = D-erythro-1-(imidazol-4-yl)glycerol 3-phosphate + 5-amino-1-(5-phospho-beta-D-ribosyl)imidazole-4-carboxamide + L-glutamate + H(+). Its pathway is amino-acid biosynthesis; L-histidine biosynthesis; L-histidine from 5-phospho-alpha-D-ribose 1-diphosphate: step 5/9. In terms of biological role, IGPS catalyzes the conversion of PRFAR and glutamine to IGP, AICAR and glutamate. The HisF subunit catalyzes the cyclization activity that produces IGP and AICAR from PRFAR using the ammonia provided by the HisH subunit. This is Imidazole glycerol phosphate synthase subunit HisF from Desulforapulum autotrophicum (strain ATCC 43914 / DSM 3382 / VKM B-1955 / HRM2) (Desulfobacterium autotrophicum).